An 87-amino-acid chain; its full sequence is Small ribosomal subunit protein uS17 (87 aa).

Belongs to the universal ribosomal protein uS17 family. As to quaternary structure, part of the 30S ribosomal subunit.

One of the primary rRNA binding proteins, it binds specifically to the 5'-end of 16S ribosomal RNA. The sequence is that of Small ribosomal subunit protein uS17 from Heliobacterium modesticaldum (strain ATCC 51547 / Ice1).